Consider the following 622-residue polypeptide: Threonine--tRNA ligase (622 aa).

The segment at 1–134 (MKTLLIHSDY…GHPLSELSRK (134 aa)) is editing domain. The tract at residues 199–498 (PHVKYIKEKE…TLEDKPPALP (300 aa)) is catalytic. Zn(2+) contacts are provided by Cys291, His343, and His467.

The protein belongs to the class-II aminoacyl-tRNA synthetase family. As to quaternary structure, homodimer. Requires Zn(2+) as cofactor.

It localises to the cytoplasm. The enzyme catalyses tRNA(Thr) + L-threonine + ATP = L-threonyl-tRNA(Thr) + AMP + diphosphate + H(+). Functionally, catalyzes the attachment of threonine to tRNA(Thr) in a two-step reaction: L-threonine is first activated by ATP to form Thr-AMP and then transferred to the acceptor end of tRNA(Thr). Also edits incorrectly charged L-seryl-tRNA(Thr). In Methanococcus vannielii (strain ATCC 35089 / DSM 1224 / JCM 13029 / OCM 148 / SB), this protein is Threonine--tRNA ligase.